The following is a 962-amino-acid chain: Probable transport protein MmpL9 (962 aa).

Helical transmembrane passes span 25 to 45 (LAAI…SVAV), 201 to 223 (LITG…SIAT), 225 to 247 (LLIL…FLGY), 256 to 276 (FVVN…AIFL), 302 to 322 (ANVI…LSFA), 335 to 355 (AIGM…IIAI), 383 to 403 (WPGP…LALP), 768 to 788 (YDIL…MLMI), 796 to 816 (LVIV…SVLI), 820 to 840 (FVGL…LLAV), 867 to 887 (AMAG…FTMA), and 895 to 915 (RVIG…TLVV).

It belongs to the resistance-nodulation-cell division (RND) (TC 2.A.6) family. MmpL subfamily.

The protein localises to the cell membrane. The protein is Probable transport protein MmpL9 (mmpL9) of Mycobacterium tuberculosis (strain ATCC 25618 / H37Rv).